We begin with the raw amino-acid sequence, 330 residues long: Calponin-3 (330 aa).

Lysine 23 is modified (N6-acetyllysine). A Calponin-homology (CH) domain is found at 26 to 130 (QQAEEDLRNW…TLVALAGLAK (105 aa)). Lysine 158 carries the post-translational modification N6-methyllysine. Calponin-like repeat units follow at residues 164 to 189 (IGLQ…RHLY), 204 to 229 (ISLQ…RDIY), and 243 to 268 (ISLQ…RQVY). The disordered stretch occupies residues 279–330 (PVIHNGSQGTGTNGSEISDSDYQAEYPDEYHGEYPDEYPREYQYGDDQGIDY). Positions 306–318 (DEYHGEYPDEYPR) are enriched in basic and acidic residues.

This sequence belongs to the calponin family.

Functionally, thin filament-associated protein that is implicated in the regulation and modulation of smooth muscle contraction. It is capable of binding to actin, calmodulin and tropomyosin. The interaction of calponin with actin inhibits the actomyosin Mg-ATPase activity. In Rattus norvegicus (Rat), this protein is Calponin-3 (Cnn3).